Reading from the N-terminus, the 593-residue chain is NADH-quinone oxidoreductase subunit C/D (593 aa).

Residues 1-184 form an NADH dehydrogenase I subunit C region; sequence MTADSVLSIP…DPYSLSAAKQ (184 aa). Residues 208 to 593 are NADH dehydrogenase I subunit D; sequence DFMFLNLGPN…IDFVMADVDR (386 aa).

In the N-terminal section; belongs to the complex I 30 kDa subunit family. This sequence in the C-terminal section; belongs to the complex I 49 kDa subunit family. As to quaternary structure, NDH-1 is composed of 13 different subunits. Subunits NuoB, CD, E, F, and G constitute the peripheral sector of the complex.

It is found in the cell inner membrane. The enzyme catalyses a quinone + NADH + 5 H(+)(in) = a quinol + NAD(+) + 4 H(+)(out). NDH-1 shuttles electrons from NADH, via FMN and iron-sulfur (Fe-S) centers, to quinones in the respiratory chain. The immediate electron acceptor for the enzyme in this species is believed to be ubiquinone. Couples the redox reaction to proton translocation (for every two electrons transferred, four hydrogen ions are translocated across the cytoplasmic membrane), and thus conserves the redox energy in a proton gradient. This chain is NADH-quinone oxidoreductase subunit C/D, found in Azotobacter vinelandii (strain DJ / ATCC BAA-1303).